We begin with the raw amino-acid sequence, 398 residues long: Dual-specificity RNA methyltransferase RlmN (398 aa).

E119 acts as the Proton acceptor in catalysis. The region spanning 125–364 (EADRATLCVS…TIVRKTRGDD (240 aa)) is the Radical SAM core domain. A disulfide bridge connects residues C132 and C369. Positions 139, 143, and 146 each coordinate [4Fe-4S] cluster. S-adenosyl-L-methionine-binding positions include 193-194 (GE), S225, 247-249 (SLH), and N326. C369 serves as the catalytic S-methylcysteine intermediate.

It belongs to the radical SAM superfamily. RlmN family. It depends on [4Fe-4S] cluster as a cofactor.

The protein resides in the cytoplasm. It catalyses the reaction adenosine(2503) in 23S rRNA + 2 reduced [2Fe-2S]-[ferredoxin] + 2 S-adenosyl-L-methionine = 2-methyladenosine(2503) in 23S rRNA + 5'-deoxyadenosine + L-methionine + 2 oxidized [2Fe-2S]-[ferredoxin] + S-adenosyl-L-homocysteine. The enzyme catalyses adenosine(37) in tRNA + 2 reduced [2Fe-2S]-[ferredoxin] + 2 S-adenosyl-L-methionine = 2-methyladenosine(37) in tRNA + 5'-deoxyadenosine + L-methionine + 2 oxidized [2Fe-2S]-[ferredoxin] + S-adenosyl-L-homocysteine. In terms of biological role, specifically methylates position 2 of adenine 2503 in 23S rRNA and position 2 of adenine 37 in tRNAs. m2A2503 modification seems to play a crucial role in the proofreading step occurring at the peptidyl transferase center and thus would serve to optimize ribosomal fidelity. This chain is Dual-specificity RNA methyltransferase RlmN, found in Yersinia pseudotuberculosis serotype IB (strain PB1/+).